Reading from the N-terminus, the 264-residue chain is MKIEAVIFDWAGTTVDYGCFAPLEVFMEIFYKRGVGITAEEARKPMGLLKIDHVRALTEMPRIANEWNRIFGQLPTETDIQEMYEEFEEILFAILPRYASPIHGVKEVIASLRERGIKIGSTTGYTREMMDIVAKEAALQGYKPDFLVTPDDVPAGRPYPWMCYKNAMELGVYPMNHMIKIGDTVSDMKEGRNAGMWTVGVILGSSELGLSEEEVENMDSAELREKIEVVRNRFVENGAHFTIETMQELESVMERIEKQELIIS.

Aspartate 9 serves as the catalytic Nucleophile. Mg(2+)-binding residues include aspartate 9 and alanine 11. Lysine 50 serves as the catalytic Schiff-base intermediate with substrate. Aspartate 183 lines the Mg(2+) pocket.

Belongs to the HAD-like hydrolase superfamily. PhnX family. As to quaternary structure, homodimer. Mg(2+) serves as cofactor.

The enzyme catalyses phosphonoacetaldehyde + H2O = acetaldehyde + phosphate + H(+). Involved in phosphonate degradation. The protein is Phosphonoacetaldehyde hydrolase of Bacillus thuringiensis (strain Al Hakam).